The chain runs to 258 residues: Isoprenyl transferase (258 aa).

Asp38 is a catalytic residue. Mg(2+) is bound at residue Asp38. Substrate-binding positions include 39–42 (GNGR), Trp43, Arg51, His55, and 83–85 (STE). The active-site Proton acceptor is the Asn86. Substrate is bound by residues Trp87, Arg89, Arg206, and 212–214 (RIS). Residue Glu225 participates in Mg(2+) binding.

Belongs to the UPP synthase family. As to quaternary structure, homodimer. The cofactor is Mg(2+).

In terms of biological role, catalyzes the condensation of isopentenyl diphosphate (IPP) with allylic pyrophosphates generating different type of terpenoids. The polypeptide is Isoprenyl transferase (Bacillus anthracis).